The chain runs to 354 residues: Uroporphyrinogen decarboxylase (354 aa).

Substrate is bound by residues 27 to 31, Asp77, Tyr154, Thr209, and His327; that span reads RQAGR.

It belongs to the uroporphyrinogen decarboxylase family. As to quaternary structure, homodimer.

The protein resides in the cytoplasm. It carries out the reaction uroporphyrinogen III + 4 H(+) = coproporphyrinogen III + 4 CO2. It participates in porphyrin-containing compound metabolism; protoporphyrin-IX biosynthesis; coproporphyrinogen-III from 5-aminolevulinate: step 4/4. In terms of biological role, catalyzes the decarboxylation of four acetate groups of uroporphyrinogen-III to yield coproporphyrinogen-III. The polypeptide is Uroporphyrinogen decarboxylase (Histophilus somni (strain 2336) (Haemophilus somnus)).